A 904-amino-acid polypeptide reads, in one-letter code: Alanine--tRNA ligase (904 aa).

Zn(2+)-binding residues include His-584, His-588, Cys-687, and His-691.

The protein belongs to the class-II aminoacyl-tRNA synthetase family. Zn(2+) serves as cofactor.

The protein localises to the cytoplasm. It carries out the reaction tRNA(Ala) + L-alanine + ATP = L-alanyl-tRNA(Ala) + AMP + diphosphate. In terms of biological role, catalyzes the attachment of alanine to tRNA(Ala) in a two-step reaction: alanine is first activated by ATP to form Ala-AMP and then transferred to the acceptor end of tRNA(Ala). Also edits incorrectly charged Ser-tRNA(Ala) and Gly-tRNA(Ala) via its editing domain. In Mycobacterium bovis (strain ATCC BAA-935 / AF2122/97), this protein is Alanine--tRNA ligase.